Consider the following 459-residue polypeptide: Exodeoxyribonuclease 7 large subunit (459 aa).

This sequence belongs to the XseA family. In terms of assembly, heterooligomer composed of large and small subunits.

Its subcellular location is the cytoplasm. The catalysed reaction is Exonucleolytic cleavage in either 5'- to 3'- or 3'- to 5'-direction to yield nucleoside 5'-phosphates.. Bidirectionally degrades single-stranded DNA into large acid-insoluble oligonucleotides, which are then degraded further into small acid-soluble oligonucleotides. The chain is Exodeoxyribonuclease 7 large subunit from Pseudomonas savastanoi pv. phaseolicola (strain 1448A / Race 6) (Pseudomonas syringae pv. phaseolicola (strain 1448A / Race 6)).